The chain runs to 313 residues: Interferon-inducible double-stranded RNA-dependent protein kinase activator A (313 aa).

The tract at residues 1-20 is disordered; sequence MSHSRHRAEAPPLQREDSGT. Sufficient for self-association and interaction with TARBP2 regions lie at residues 1–103, 102–195, and 195–313; these read MSHS…KANA, NASI…FSNI, and ISPE…AERK. Ser18 bears the Phosphoserine mark. DRBM domains follow at residues 34–101, 126–194, and 240–308; these read TPIQ…ILKA, NPIG…KFSN, and DYIQ…YLKI. Phosphoserine is present on residues Ser167, Ser246, and Ser287.

The protein belongs to the PRKRA family. Homodimer. Interacts with EIF2AK2/PKR through its DRBM domains. Interacts with DICER1, AGO2 and TARBP2. Also able to interact with dsRNA. Interacts with UBC9. Forms a complex with UBC9 and p53/TP53. Interacts with DUS2L (via DRBM domain). Phosphorylated at Ser-246 in unstressed cells and at Ser-287 in stressed cells. Phosphorylation at Ser-246 appears to be a prerequisite for subsequent phosphorylation at Ser-287. Phosphorylation at Ser-246 and Ser-287 are necessary for activation of EIF2AK2/PKR under conditions of stress.

It localises to the cytoplasm. It is found in the perinuclear region. Activates EIF2AK2/PKR in the absence of double-stranded RNA (dsRNA), leading to phosphorylation of EIF2S1/EFI2-alpha and inhibition of translation and induction of apoptosis. Required for siRNA production by DICER1 and for subsequent siRNA-mediated post-transcriptional gene silencing. Does not seem to be required for processing of pre-miRNA to miRNA by DICER1. Promotes UBC9-p53/TP53 association, sumoylation and phosphorylation of p53/TP53 at 'Lys-386' at 'Ser-392' respectively and enhances its activity in a EIF2AK2/PKR-dependent manner. This chain is Interferon-inducible double-stranded RNA-dependent protein kinase activator A (Prkra), found in Rattus norvegicus (Rat).